Here is a 249-residue protein sequence, read N- to C-terminus: Diphthine synthase (249 aa).

S-adenosyl-L-methionine is bound by residues aspartate 83, leucine 86, 111–112, leucine 163, and leucine 205; that span reads SI.

It belongs to the diphthine synthase family. As to quaternary structure, homodimer.

The catalysed reaction is 2-[(3S)-amino-3-carboxypropyl]-L-histidyl-[translation elongation factor 2] + 3 S-adenosyl-L-methionine = diphthine-[translation elongation factor 2] + 3 S-adenosyl-L-homocysteine + 3 H(+). It functions in the pathway protein modification; peptidyl-diphthamide biosynthesis. Its function is as follows. S-adenosyl-L-methionine-dependent methyltransferase that catalyzes the trimethylation of the amino group of the modified target histidine residue in translation elongation factor 2 (EF-2), to form an intermediate called diphthine. The three successive methylation reactions represent the second step of diphthamide biosynthesis. This Pyrobaculum islandicum (strain DSM 4184 / JCM 9189 / GEO3) protein is Diphthine synthase.